Consider the following 1075-residue polypeptide: Protein nervous wreck (1075 aa).

The region spanning 11-289 (VKFLKNLHTE…QAQQLTREYN (279 aa)) is the F-BAR domain. 2 disordered regions span residues 361-381 (LRDSGQRTDPNDPNGPDLDTK) and 431-536 (SASS…DEPI). The span at 431 to 453 (SASSISMRTDASGQGENPSSDSF) shows a compositional bias: polar residues. Over residues 469-482 (PKQEQQLSRDRTFS) the composition is skewed to basic and acidic residues. A compositionally biased stretch (low complexity) spans 493–512 (SAAAASSAAAASSSMMASSA). 2 consecutive SH3 domains span residues 542-603 (EAIF…IDQE) and 658-721 (SDVE…ECDE). Disordered stretches follow at residues 722 to 747 (MGEPLSEGGDESPPPTAAPTFALPPA), 769 to 837 (SQDT…EKGA), and 864 to 917 (GADK…EGNA). Pro residues-rich tracts occupy residues 733 to 747 (SPPPTAAPTFALPPA) and 809 to 818 (QPPPSLPPPQ). Over residues 819–837 (LAKAGGSAPGSGSKVEKGA) the composition is skewed to low complexity. The span at 883-897 (VSKEQPAEVAKKPDI) shows a compositional bias: basic and acidic residues.

In terms of assembly, homodimer. Interacts (via SH3 domain 1) with WASp. Interacts (via SH3 domain 1) with shi/dynamin. Interacts (via SH3 domain 2) with Dap160. Interacts (via F-BAR domain) with SH3PX1. Interacts (via SH3 domain 2) with Snx16. Identified in a complex with Syn and Syt1. As to expression, detected in larval body wall muscle. Detected at the neuromuscular junction, on motoneuron axons and axon terminals, at synaptic boutons in the periactive zone surrounding the synapse (at protein level). Detected on motoneuron axons and axon terminals, at synaptic boutons in the periactive zone surrounding the synapse.

It localises to the endomembrane system. The protein localises to the synapse. Its subcellular location is the cell projection. It is found in the axon. The protein resides in the presynaptic cell membrane. It localises to the cytoplasmic vesicle. The protein localises to the secretory vesicle. Its subcellular location is the synaptic vesicle. It is found in the recycling endosome. In terms of biological role, adapter protein that provides a link between vesicular membrane traffic and the actin assembly machinery. Acts together with Cdc42 to stimulate actin nucleation mediated by WASp and the ARP2/3 complex. Binds to membranes enriched in phosphatidylinositol 4,5-bisphosphate and causes local membrane deformation. Required for normal structure and function of synapses at the neuromuscular junction. Plays a role in synaptic vesicle trafficking. Required for the release of a normal number of synaptic vesicles per action potential. This Drosophila melanogaster (Fruit fly) protein is Protein nervous wreck.